The following is a 330-amino-acid chain: Beta-ketoacyl-[acyl-carrier-protein] synthase III (330 aa).

Residues Cys115 and His255 contribute to the active site. The interval 256–260 is ACP-binding; the sequence is QANFR. Asn285 is an active-site residue.

The protein belongs to the thiolase-like superfamily. FabH family. As to quaternary structure, homodimer.

It localises to the cytoplasm. It carries out the reaction malonyl-[ACP] + acetyl-CoA + H(+) = 3-oxobutanoyl-[ACP] + CO2 + CoA. It functions in the pathway lipid metabolism; fatty acid biosynthesis. Catalyzes the condensation reaction of fatty acid synthesis by the addition to an acyl acceptor of two carbons from malonyl-ACP. Catalyzes the first condensation reaction which initiates fatty acid synthesis and may therefore play a role in governing the total rate of fatty acid production. Possesses both acetoacetyl-ACP synthase and acetyl transacylase activities. Its substrate specificity determines the biosynthesis of branched-chain and/or straight-chain of fatty acids. In Helicobacter pylori (strain G27), this protein is Beta-ketoacyl-[acyl-carrier-protein] synthase III.